Consider the following 599-residue polypeptide: Elongation factor 4 (599 aa).

A tr-type G domain is found at 5–187 (SHIRNFSIIA…RLVTAIPAPE (183 aa)). GTP contacts are provided by residues 17–22 (DHGKST) and 134–137 (NKMD).

The protein belongs to the TRAFAC class translation factor GTPase superfamily. Classic translation factor GTPase family. LepA subfamily.

It is found in the cell inner membrane. It carries out the reaction GTP + H2O = GDP + phosphate + H(+). Its function is as follows. Required for accurate and efficient protein synthesis under certain stress conditions. May act as a fidelity factor of the translation reaction, by catalyzing a one-codon backward translocation of tRNAs on improperly translocated ribosomes. Back-translocation proceeds from a post-translocation (POST) complex to a pre-translocation (PRE) complex, thus giving elongation factor G a second chance to translocate the tRNAs correctly. Binds to ribosomes in a GTP-dependent manner. The polypeptide is Elongation factor 4 (Pseudomonas aeruginosa (strain LESB58)).